We begin with the raw amino-acid sequence, 646 residues long: Phosphomethylpyrimidine synthase (646 aa).

Residues 1–13 (MNIRSNPDTTRPA) show a composition bias toward polar residues. Residues 1–30 (MNIRSNPDTTRPAVTTGALPSSRKMFSAPD) form a disordered region. Residues Asn221, Met250, Tyr279, His315, 335–337 (SRG), 376–379 (DGLR), and Glu415 contribute to the substrate site. His419 contributes to the Zn(2+) binding site. Tyr442 is a substrate binding site. His483 serves as a coordination point for Zn(2+). [4Fe-4S] cluster-binding residues include Cys563, Cys566, and Cys571.

Belongs to the ThiC family. Homodimer. Requires [4Fe-4S] cluster as cofactor.

The catalysed reaction is 5-amino-1-(5-phospho-beta-D-ribosyl)imidazole + S-adenosyl-L-methionine = 4-amino-2-methyl-5-(phosphooxymethyl)pyrimidine + CO + 5'-deoxyadenosine + formate + L-methionine + 3 H(+). Its pathway is cofactor biosynthesis; thiamine diphosphate biosynthesis. In terms of biological role, catalyzes the synthesis of the hydroxymethylpyrimidine phosphate (HMP-P) moiety of thiamine from aminoimidazole ribotide (AIR) in a radical S-adenosyl-L-methionine (SAM)-dependent reaction. The polypeptide is Phosphomethylpyrimidine synthase (Nitrobacter winogradskyi (strain ATCC 25391 / DSM 10237 / CIP 104748 / NCIMB 11846 / Nb-255)).